We begin with the raw amino-acid sequence, 59 residues long: Pycsar effector protein MePycTM (59 aa).

A helical membrane pass occupies residues 36 to 56 (VAVAIYLLGAAMLSSGAAVLA).

It localises to the cell membrane. In terms of biological role, pycsar (pyrimidine cyclase system for antiphage resistance) provides immunity against bacteriophage. The pyrimidine cyclase (PycC) synthesizes cyclic nucleotides in response to infection; these serve as specific second messenger signals. The signals activate the adjacent effector, leading to bacterial cell death and abortive phage infection. A clade D Pycsar system. Functionally, the effector gene of a two-gene Pycsar system. Expression of this and adjacent uridylate cyclase MePycC (AC A0A1C5G2V9) probably confers resistance to bacteriophage. The genes are probably only expressed in response to bacteriophage infection. Probably only responds to cUMP (produced by its cognate NTP cyclase), acts by impairing membrane integrity. The protein is Pycsar effector protein MePycTM of Micromonospora echinofusca.